Here is a 293-residue protein sequence, read N- to C-terminus: Methylsterol monooxygenase 1 (293 aa).

The next 2 helical transmembrane spans lie at 55-75 (LIVH…FQFI) and 100-120 (VLLF…YYFT). A Fatty acid hydroxylase domain is found at 145-274 (CAVIEDTWHY…FTWWDRIFGT (130 aa)). The Histidine box-1 motif lies at 157–161 (HRLLH). The Histidine box-2 motif lies at 170–174 (HKIHH). A helical transmembrane segment spans residues 199 to 219 (FFIGIMLLCDHVILLWAWVTV). The Histidine box-3 signature appears at 249-255 (HHDFHHM).

Belongs to the sterol desaturase family. Fe cation serves as cofactor. Ubiquitinated by MARCHF6, leading to proteasomal degradation.

Its subcellular location is the endoplasmic reticulum membrane. It catalyses the reaction 4,4-dimethyl-5alpha-cholest-7-en-3beta-ol + 6 Fe(II)-[cytochrome b5] + 3 O2 + 5 H(+) = 4alpha-carboxy-4beta-methyl-5alpha-cholest-7-ene-3beta-ol + 6 Fe(III)-[cytochrome b5] + 4 H2O. The catalysed reaction is 4,4-dimethyl-5alpha-cholesta-8,24-dien-3beta-ol + 6 Fe(II)-[cytochrome b5] + 3 O2 + 5 H(+) = 4beta-methylzymosterol-4alpha-carboxylate + 6 Fe(III)-[cytochrome b5] + 4 H2O. It carries out the reaction 4alpha-methylzymosterol + 6 Fe(II)-[cytochrome b5] + 3 O2 + 5 H(+) = 4alpha-carboxyzymosterol + 6 Fe(III)-[cytochrome b5] + 4 H2O. The enzyme catalyses 4alpha-methyl-5alpha-cholest-7-en-3beta-ol + 6 Fe(II)-[cytochrome b5] + 3 O2 + 5 H(+) = 4alpha-carboxy-5alpha-cholest-7-en-3beta-ol + 6 Fe(III)-[cytochrome b5] + 4 H2O. It catalyses the reaction 4,4-dimethyl-5alpha-cholest-8-en-3beta-ol + 6 Fe(II)-[cytochrome b5] + 3 O2 + 5 H(+) = 4alpha-carboxy-4beta-methyl-5alpha-cholest-8-en-3beta-ol + 6 Fe(III)-[cytochrome b5] + 4 H2O. The catalysed reaction is 4alpha-methyl-5alpha-cholest-8-en-3beta-ol + 6 Fe(II)-[cytochrome b5] + 3 O2 + 5 H(+) = 4alpha-carboxy-5alpha-cholest-8-ene-3beta-ol + 6 Fe(III)-[cytochrome b5] + 4 H2O. Its pathway is steroid biosynthesis; zymosterol biosynthesis; zymosterol from lanosterol: step 3/6. It participates in steroid biosynthesis; cholesterol biosynthesis. In terms of biological role, catalyzes the three-step monooxygenation required for the demethylation of 4,4-dimethyl and 4alpha-methylsterols, which can be subsequently metabolized to cholesterol. The protein is Methylsterol monooxygenase 1 (MSMO1) of Sus scrofa (Pig).